A 107-amino-acid chain; its full sequence is uncharacterized protein (107 aa).

Positions 1-34 (MRLQWPKFITFLSTGSCCLLFLLLPCSFFPLPTA) are cleaved as a signal peptide.

This is an uncharacterized protein from Saccharomyces cerevisiae (strain ATCC 204508 / S288c) (Baker's yeast).